Here is a 178-residue protein sequence, read N- to C-terminus: ADP-ribosylation factor-like protein 5 (178 aa).

Gly2 is lipidated: N-myristoyl glycine. GTP-binding positions include 24-31, 67-71, and 126-129; these read GLDNAGKT, DIGGQ, and NKQD.

Belongs to the small GTPase superfamily. Arf family.

The protein resides in the golgi apparatus. In terms of biological role, GTP-binding protein that may be involved in protein trafficking; may modulate vesicle budding and uncoating within the Golgi apparatus. Plays a role in the shedding of pathogen spores from intestinal cells. This Caenorhabditis elegans protein is ADP-ribosylation factor-like protein 5 (arl-5).